The sequence spans 38 residues: Large ribosomal subunit protein bL36 (38 aa).

This sequence belongs to the bacterial ribosomal protein bL36 family.

This Acholeplasma laidlawii (strain PG-8A) protein is Large ribosomal subunit protein bL36.